Reading from the N-terminus, the 201-residue chain is NADH-quinone oxidoreductase subunit C 1 (201 aa).

The protein belongs to the complex I 30 kDa subunit family. As to quaternary structure, NDH-1 is composed of 14 different subunits. Subunits NuoB, C, D, E, F, and G constitute the peripheral sector of the complex.

It localises to the cell inner membrane. The enzyme catalyses a quinone + NADH + 5 H(+)(in) = a quinol + NAD(+) + 4 H(+)(out). Functionally, NDH-1 shuttles electrons from NADH, via FMN and iron-sulfur (Fe-S) centers, to quinones in the respiratory chain. The immediate electron acceptor for the enzyme in this species is believed to be ubiquinone. Couples the redox reaction to proton translocation (for every two electrons transferred, four hydrogen ions are translocated across the cytoplasmic membrane), and thus conserves the redox energy in a proton gradient. In Rhizobium meliloti (strain 1021) (Ensifer meliloti), this protein is NADH-quinone oxidoreductase subunit C 1.